The sequence spans 217 residues: Probable transaldolase (217 aa).

The active-site Schiff-base intermediate with substrate is the K83.

The protein belongs to the transaldolase family. Type 3B subfamily.

It is found in the cytoplasm. The catalysed reaction is D-sedoheptulose 7-phosphate + D-glyceraldehyde 3-phosphate = D-erythrose 4-phosphate + beta-D-fructose 6-phosphate. It participates in carbohydrate degradation; pentose phosphate pathway; D-glyceraldehyde 3-phosphate and beta-D-fructose 6-phosphate from D-ribose 5-phosphate and D-xylulose 5-phosphate (non-oxidative stage): step 2/3. Functionally, transaldolase is important for the balance of metabolites in the pentose-phosphate pathway. The sequence is that of Probable transaldolase from Clostridium botulinum (strain Loch Maree / Type A3).